A 183-amino-acid chain; its full sequence is Putative 3-methyladenine DNA glycosylase (183 aa).

It belongs to the DNA glycosylase MPG family.

The protein is Putative 3-methyladenine DNA glycosylase of Legionella pneumophila (strain Lens).